The following is a 739-amino-acid chain: UPF0313 protein YgiQ (739 aa).

The Radical SAM core domain occupies 372 to 650; that stretch reads AYEMIRFSVN…KALLRYHDPA (279 aa). [4Fe-4S] cluster is bound by residues C386, C390, and C393. Positions 685 to 739 are disordered; the sequence is REARRQNRNTRPALTKHTPMATQRQTPATAKKASSTQSRPVNAGAKKRPKAAVGR. Residues 704–724 show a composition bias toward polar residues; the sequence is MATQRQTPATAKKASSTQSRP. Residues 729 to 739 are compositionally biased toward basic residues; sequence AKKRPKAAVGR.

The protein belongs to the UPF0313 family. The cofactor is [4Fe-4S] cluster.

This Escherichia coli (strain K12) protein is UPF0313 protein YgiQ (ygiQ).